Reading from the N-terminus, the 353-residue chain is 2-Hydroxyacid oxidase 2 (353 aa).

The FMN hydroxy acid dehydrogenase domain occupies 2–353; it reads PLVCLTDFRE…NQDLIQFSRL (352 aa). Residues 77-79, serine 106, and glutamine 128 each bind FMN; that span reads PTG. Tyrosine 130 is a binding site for a 2-oxocarboxylate. Threonine 156 is a binding site for FMN. Arginine 165 serves as a coordination point for a 2-oxocarboxylate. Lysine 224 contacts FMN. The active-site Proton acceptor is histidine 248. Arginine 251 lines the a 2-oxocarboxylate pocket. FMN-binding positions include 279 to 283 and 302 to 303; these read DGGIR and GR. A Microbody targeting signal motif is present at residues 351-353; that stretch reads SRL.

It belongs to the FMN-dependent alpha-hydroxy acid dehydrogenase family. Homotetramer. Requires FMN as cofactor.

The protein localises to the peroxisome. The catalysed reaction is a (2S)-2-hydroxycarboxylate + O2 = a 2-oxocarboxylate + H2O2. It carries out the reaction 2-hydroxyhexadecanoate + O2 = 2-oxohexadecanoate + H2O2. The enzyme catalyses 2-hydroxyoctanoate + O2 = 2-oxooctanoate + H2O2. It functions in the pathway lipid metabolism; fatty acid metabolism. Oxidase that catalyzes the oxidation of medium and long chain hydroxyacids such as 2-hydroxyhexadecanoate and 2-hydroxyoctanoate, to the correspondong 2-oxoacids. Its role in the oxidation of 2-hydroxy fatty acids may contribute to the general pathway of fatty acid alpha-oxidation. Active in vitro with the artificial electron acceptor 2,6-dichlorophenolindophenol (DCIP), but O2 is believed to be the physiological electron acceptor, leading to the production of H2O2. The protein is 2-Hydroxyacid oxidase 2 (HAO2) of Bos taurus (Bovine).